An 85-amino-acid chain; its full sequence is uncharacterized protein (85 aa).

An N-terminal signal peptide occupies residues 1–35 (MIEDPSKKISLWQKWINVDPKKRILFSLGLFALSA).

Its subcellular location is the secreted. This is an uncharacterized protein from Dictyostelium discoideum (Social amoeba).